A 72-amino-acid polypeptide reads, in one-letter code: Sperm protein associated with the nucleus on the X chromosome N1 (72 aa).

The segment at 1–40 (MEKPTSSTNGEKRKSPCDSNNKNDEMQETPNRDLVLEPSL) is disordered. Residues 10–35 (GEKRKSPCDSNNKNDEMQETPNRDLV) are compositionally biased toward basic and acidic residues.

The protein belongs to the SPAN-X family.

In Gorilla gorilla gorilla (Western lowland gorilla), this protein is Sperm protein associated with the nucleus on the X chromosome N1 (SPANXN1).